The following is a 364-amino-acid chain: Fructose-bisphosphate aldolase A (364 aa).

Position 5 is a phosphotyrosine (Tyr-5). Phosphothreonine is present on Thr-9. Ser-36 and Ser-39 each carry phosphoserine. Lys-42 bears the N6-acetyllysine; alternate mark. Lys-42 is covalently cross-linked (Glycyl lysine isopeptide (Lys-Gly) (interchain with G-Cter in SUMO1); alternate). Lys-42 is covalently cross-linked (Glycyl lysine isopeptide (Lys-Gly) (interchain with G-Cter in SUMO2); alternate). Position 43 (Arg-43) interacts with beta-D-fructose 1,6-bisphosphate. Ser-46 is modified (phosphoserine). The residue at position 99 (Lys-99) is an N6-(2-hydroxyisobutyryl)lysine. Lys-108 is modified (N6-acetyllysine). The residue at position 111 (Lys-111) is an N6-acetyllysine; alternate. Residue Lys-111 is modified to N6-malonyllysine; alternate. The residue at position 132 (Ser-132) is a Phosphoserine. Residue Lys-147 is modified to N6-(2-hydroxyisobutyryl)lysine. Glu-188 (proton acceptor) is an active-site residue. Lys-230 (schiff-base intermediate with dihydroxyacetone-P) is an active-site residue. At Ser-272 the chain carries Phosphoserine. Residues 272-274, Ser-301, and Arg-304 each bind beta-D-fructose 1,6-bisphosphate; that span reads SGG. Position 312 is an N6-malonyllysine (Lys-312). Lys-330 bears the N6-acetyllysine mark.

It belongs to the class I fructose-bisphosphate aldolase family. Homotetramer. Interacts with SNX9 and WAS. Interacts with FBP2; the interaction blocks FBP2 inhibition by physiological concentrations of AMP and reduces inhibition by Ca(2+). As to expression, expressed in muscle, brain and hepatoma cells.

The protein resides in the cytoplasm. The protein localises to the myofibril. Its subcellular location is the sarcomere. It localises to the i band. It is found in the m line. It carries out the reaction beta-D-fructose 1,6-bisphosphate = D-glyceraldehyde 3-phosphate + dihydroxyacetone phosphate. It functions in the pathway carbohydrate degradation; glycolysis; D-glyceraldehyde 3-phosphate and glycerone phosphate from D-glucose: step 4/4. Its function is as follows. Catalyzes the reversible conversion of beta-D-fructose 1,6-bisphosphate (FBP) into two triose phosphate and plays a key role in glycolysis and gluconeogenesis. In addition, may also function as scaffolding protein. This chain is Fructose-bisphosphate aldolase A (Aldoa), found in Rattus norvegicus (Rat).